Consider the following 445-residue polypeptide: Phosphoglucosamine mutase (445 aa).

Catalysis depends on Ser-102, which acts as the Phosphoserine intermediate. Mg(2+)-binding residues include Ser-102, Asp-241, Asp-243, and Asp-245. The residue at position 102 (Ser-102) is a Phosphoserine.

This sequence belongs to the phosphohexose mutase family. Mg(2+) serves as cofactor. Post-translationally, activated by phosphorylation.

It carries out the reaction alpha-D-glucosamine 1-phosphate = D-glucosamine 6-phosphate. Catalyzes the conversion of glucosamine-6-phosphate to glucosamine-1-phosphate. The sequence is that of Phosphoglucosamine mutase from Escherichia fergusonii (strain ATCC 35469 / DSM 13698 / CCUG 18766 / IAM 14443 / JCM 21226 / LMG 7866 / NBRC 102419 / NCTC 12128 / CDC 0568-73).